The sequence spans 700 residues: Tectonic-2 (700 aa).

The N-terminal stretch at 1–25 (MGSLSPLSFLWGLLLLQGVLRPLRG) is a signal peptide. At 26-665 (DPVFIPPFIR…YYQGEPRPQC (640 aa)) the chain is on the extracellular side. N-linked (GlcNAc...) asparagine glycans are attached at residues Asn-76, Asn-82, Asn-146, Asn-156, and Asn-389. A helical membrane pass occupies residues 666 to 682 (VAKGLMLLSLLMLAILL). Residues 683–700 (RHPWVGMCKAWSSASIQH) lie on the Cytoplasmic side of the membrane.

The protein belongs to the tectonic family. In terms of assembly, part of the tectonic-like complex (also named B9 complex).

Its subcellular location is the membrane. It localises to the cytoplasm. The protein localises to the cytoskeleton. The protein resides in the cilium basal body. Component of the tectonic-like complex, a complex localized at the transition zone of primary cilia and acting as a barrier that prevents diffusion of transmembrane proteins between the cilia and plasma membranes. Required for hedgehog signaling transduction. This is Tectonic-2 (Tctn2) from Rattus norvegicus (Rat).